Consider the following 309-residue polypeptide: Carbonic anhydrase 4 (309 aa).

An N-terminal signal peptide occupies residues 1 to 17 (MQLLLALLALAYVAPST). In terms of domain architecture, Alpha-carbonic anhydrase spans 20 to 282 (SHWCYEIQAK…LGNRQVFRSH (263 aa)). 2 disulfide bridges follow: C23–C35 and C45–C226. H87 (proton donor/acceptor) is an active-site residue. Positions 114, 116, and 139 each coordinate Zn(2+). N-linked (GlcNAc...) asparagine glycosylation occurs at N193. Residue 222–223 (TT) coordinates substrate. The GPI-anchor amidated serine moiety is linked to residue S281. Positions 282–309 (HASGRLLSLPLPTLLVPTLTCLVASFLH) are cleaved as a propeptide — removed in mature form.

The protein belongs to the alpha-carbonic anhydrase family. As to quaternary structure, interacts with SLC4A4. Zn(2+) serves as cofactor. Post-translationally, the N-terminus is blocked. Glycosylated. In terms of tissue distribution, present in kidney and lung. Also particularly abundant in brain, muscle, heart and liver. Not detected in skin or spleen.

It is found in the cell membrane. It carries out the reaction hydrogencarbonate + H(+) = CO2 + H2O. Inhibited by acetazolamide. In terms of biological role, catalyzes the reversible hydration of carbon dioxide into bicarbonate and protons and thus is essential to maintaining intracellular and extracellular pH. May stimulate the sodium/bicarbonate transporter activity of SLC4A4 that acts in pH homeostasis. It is essential for acid overload removal from the retina and retina epithelium, and acid release in the choriocapillaris in the choroid. This Rattus norvegicus (Rat) protein is Carbonic anhydrase 4 (Ca4).